Consider the following 209-residue polypeptide: Guanylate kinase (209 aa).

The 179-residue stretch at 7–185 (GNLYIVAAPS…AAMELQSIVI (179 aa)) folds into the Guanylate kinase-like domain. Residue 14–21 (APSGGGKT) coordinates ATP.

Belongs to the guanylate kinase family.

Its subcellular location is the cytoplasm. The enzyme catalyses GMP + ATP = GDP + ADP. Its function is as follows. Essential for recycling GMP and indirectly, cGMP. The chain is Guanylate kinase from Legionella pneumophila (strain Lens).